We begin with the raw amino-acid sequence, 246 residues long: MKPSDVRSKAFAMPLTSPAFPMGPYRFVDREFVIITYRTDPERLRAVVPEPLQIAEPLVHYEFIRMADSTGFGDYTESGQVIPVEYNGQAGGYTLAMYLDDHPPIAGGRELWGFPKKLASPTLHVNTDHILGTLDYGKVRVATGTMGYKHKELDLDEQMKRLAGPNFLLKIIPHVDGSARVCELVRYYLQDIKMKGAWTGPASLELAPHALAPVADLPVLEIVEARHIVADLTLGLGEVVYDYLAQ.

The Schiff-base intermediate with acetoacetate role is filled by lysine 116.

The protein belongs to the ADC family.

The enzyme catalyses acetoacetate + H(+) = acetone + CO2. Catalyzes the conversion of acetoacetate to acetone and carbon dioxide. The polypeptide is Acetoacetate decarboxylase (Burkholderia vietnamiensis (strain G4 / LMG 22486) (Burkholderia cepacia (strain R1808))).